The following is a 76-amino-acid chain: MKIAFIVAISLAFLAVTSCIEFEKSTESHDIQKRGVTITVKPPFPGCVFYECIANCRSRGYKNGGYCTINGCQCLR.

The signal sequence occupies residues 1–19; the sequence is MKIAFIVAISLAFLAVTSC.

It belongs to the invertebrate defensin family.

Has antifungal activity against the entomopathogenic fungus M.nisopliae, but does not display any antifungal activity against S.cerevisiae nor any antimicrobial activity against M.luteus, B.subtilis, and E.coli. The chain is Gallerimycin (LOC113523440) from Galleria mellonella (Greater wax moth).